The primary structure comprises 261 residues: Cytochrome c oxidase subunit 3 (261 aa).

Residues Met-1–Pro-15 are Mitochondrial matrix-facing. Residues Trp-16–Trp-34 traverse the membrane as a helical segment. Topologically, residues Phe-35–Met-40 are mitochondrial intermembrane. Residues Thr-41–Thr-66 traverse the membrane as a helical segment. Residues Phe-67 to Thr-72 are Mitochondrial matrix-facing. Residues Pro-73 to Ser-105 form a helical membrane-spanning segment. Over Leu-106–Glu-128 the chain is Mitochondrial intermembrane. Residues Val-129–Met-152 form a helical membrane-spanning segment. Topologically, residues Glu-153 to Asn-155 are mitochondrial matrix. Residues Arg-156–Glu-183 form a helical membrane-spanning segment. At Ala-184 to Asp-190 the chain is on the mitochondrial intermembrane side. Residues Gly-191–Leu-223 traverse the membrane as a helical segment. At Lys-224–His-232 the chain is on the mitochondrial matrix side. Residues Phe-233–Ile-256 traverse the membrane as a helical segment. Residues Tyr-257 to Ser-261 are Mitochondrial intermembrane-facing.

This sequence belongs to the cytochrome c oxidase subunit 3 family. In terms of assembly, component of the cytochrome c oxidase (complex IV, CIV), a multisubunit enzyme composed of 14 subunits. The complex is composed of a catalytic core of 3 subunits MT-CO1, MT-CO2 and MT-CO3, encoded in the mitochondrial DNA, and 11 supernumerary subunits COX4I, COX5A, COX5B, COX6A, COX6B, COX6C, COX7A, COX7B, COX7C, COX8 and NDUFA4, which are encoded in the nuclear genome. The complex exists as a monomer or a dimer and forms supercomplexes (SCs) in the inner mitochondrial membrane with NADH-ubiquinone oxidoreductase (complex I, CI) and ubiquinol-cytochrome c oxidoreductase (cytochrome b-c1 complex, complex III, CIII), resulting in different assemblies (supercomplex SCI(1)III(2)IV(1) and megacomplex MCI(2)III(2)IV(2)).

Its subcellular location is the mitochondrion inner membrane. It catalyses the reaction 4 Fe(II)-[cytochrome c] + O2 + 8 H(+)(in) = 4 Fe(III)-[cytochrome c] + 2 H2O + 4 H(+)(out). Component of the cytochrome c oxidase, the last enzyme in the mitochondrial electron transport chain which drives oxidative phosphorylation. The respiratory chain contains 3 multisubunit complexes succinate dehydrogenase (complex II, CII), ubiquinol-cytochrome c oxidoreductase (cytochrome b-c1 complex, complex III, CIII) and cytochrome c oxidase (complex IV, CIV), that cooperate to transfer electrons derived from NADH and succinate to molecular oxygen, creating an electrochemical gradient over the inner membrane that drives transmembrane transport and the ATP synthase. Cytochrome c oxidase is the component of the respiratory chain that catalyzes the reduction of oxygen to water. Electrons originating from reduced cytochrome c in the intermembrane space (IMS) are transferred via the dinuclear copper A center (CU(A)) of subunit 2 and heme A of subunit 1 to the active site in subunit 1, a binuclear center (BNC) formed by heme A3 and copper B (CU(B)). The BNC reduces molecular oxygen to 2 water molecules using 4 electrons from cytochrome c in the IMS and 4 protons from the mitochondrial matrix. The protein is Cytochrome c oxidase subunit 3 (MT-CO3) of Antidorcas marsupialis (Springbok).